Reading from the N-terminus, the 708-residue chain is Solute carrier family 15 member 1 (708 aa).

Residues 1 to 21 (MGMSKSYGCFGYPLSIFFIVV) form a helical membrane-spanning segment. Residues 22–53 (NEFCERFSYYGMRALLILYFRRFIGWDDNLST) lie on the Extracellular side of the membrane. The N-linked (GlcNAc...) asparagine glycan is linked to N50. The chain crosses the membrane as a helical span at residues 54 to 74 (AIYHTFVALCYLTPILGALIA). At 75–82 (DSWLGKFK) the chain is on the cytoplasmic side. A helical transmembrane segment spans residues 83–103 (TIVSLSIVYTIGQAVTAVSSI). The Extracellular segment spans residues 104-118 (NDLTDYNKDGTPDNL). A glycan (N-linked (GlcNAc...) asparagine) is linked at N117. Residues 119 to 139 (SVHVALSMIGLALIALGTGGI) traverse the membrane as a helical segment. The Cytoplasmic segment spans residues 140–161 (KPCVSAFGGDQFEEGQEKQRNR). A helical transmembrane segment spans residues 162–182 (FFSIFYLAINAGSLISTIVTP). At 183–198 (MLRVHECGIYSQKACY) the chain is on the extracellular side. Residues 199-219 (PLAFGVPAALMAVSLIVFVIG) traverse the membrane as a helical segment. At 220–276 (SGMYKKFQPQGNVMGKVVKCIGFALKNRFRHRSKQFPKREHWLDWAKEKYDERLISQ) the chain is on the cytoplasmic side. A helical membrane pass occupies residues 277 to 297 (IKMVTKVMFLYIPLPMFWALF). The Extracellular segment spans residues 298–327 (DQQGSRWTLQATAMSGKIGLLEVQPDQMQT). Residues 328 to 348 (VNAILIVVMVPIMDAVVYPLI) traverse the membrane as a helical segment. At 349–361 (AKCGFNFTSLKRM) the chain is on the cytoplasmic side. A helical membrane pass occupies residues 362 to 382 (TVGMFLASMAFVMAAIVQLEI). Topologically, residues 383 to 584 (DKTLPVFPKQ…ISPNTVNMAL (202 aa)) are extracellular. Positions 383 to 585 (DKTLPVFPKQ…SPNTVNMALQ (203 aa)) are extracellular domain (ECD). Residues N408, N439, N495, N499, N509, N514, N527, and N539 are each glycosylated (N-linked (GlcNAc...) asparagine). A helical transmembrane segment spans residues 585–605 (QIPQYFLITCGEVVFSVTGLE). At 606-619 (FSYSQAPSNMKSVL) the chain is on the cytoplasmic side. Residues 620 to 640 (QAGWLLTVAVGNIIVLIVAGA) form a helical membrane-spanning segment. Residues 641 to 645 (GQFSE) are Extracellular-facing. A helical transmembrane segment spans residues 646–666 (QWAEYILFAALLLVVCVIFAI). Topologically, residues 667–708 (MARFYTYVNPAEIEAQFDDDEKKNLEKMNVYSTVTPVSQTQM) are cytoplasmic.

The protein belongs to the major facilitator superfamily. Proton-dependent oligopeptide transporter (POT/PTR) (TC 2.A.17) family. In terms of assembly, interacts (via extracellular domain region) with trypsin.

The protein localises to the apical cell membrane. The catalysed reaction is a dipeptide(out) + H(+)(out) = a dipeptide(in) + H(+)(in). The enzyme catalyses an L-amino acid tripeptide(out) + H(+)(out) = an L-amino acid tripeptide(in) + H(+)(in). It carries out the reaction L-alanyl-L-lysine(out) + H(+)(out) = L-alanyl-L-lysine(in) + H(+)(in). It catalyses the reaction L-alanyl-L-proline(out) + H(+)(out) = L-alanyl-L-proline(in) + H(+)(in). The catalysed reaction is L-alanyl-L-valine(out) + H(+)(out) = L-alanyl-L-valine(in) + H(+)(in). The enzyme catalyses carnosine(out) + H(+)(out) = carnosine(in) + H(+)(in). It carries out the reaction glycyl-L-glutamine(out) + H(+)(out) = glycyl-L-glutamine(in) + H(+)(in). It catalyses the reaction glycyl-L-leucine(out) + H(+)(out) = glycyl-L-leucine(in) + H(+)(in). The catalysed reaction is glycyl-L-proline(out) + H(+)(out) = glycyl-L-proline(in) + H(+)(in). The enzyme catalyses glycyl-sarcosine(out) + H(+)(out) = glycyl-sarcosine(in) + H(+)(in). It carries out the reaction L-leucyl-L-leucine(out) + H(+)(out) = L-leucyl-L-leucine(in) + H(+)(in). It catalyses the reaction L-leucyl-L-proline(out) + H(+)(out) = L-leucyl-L-proline(in) + H(+)(in). The catalysed reaction is L-phenylalanyl-L-leucine(out) + H(+)(out) = L-phenylalanyl-L-leucine(in) + H(+)(in). The enzyme catalyses L-phenylalanyl-L-phenylalanine(out) + H(+)(out) = L-phenylalanyl-L-phenylalanine(in) + H(+)(in). It carries out the reaction L-lysyl-glycine(out) + H(+)(out) = L-lysyl-glycine(in) + H(+)(in). It catalyses the reaction L-tyrosylglycine(out) + H(+)(out) = L-tyrosylglycine(in) + H(+)(in). The catalysed reaction is L-alanyl-L-aspartate(out) + 2 H(+)(out) = L-alanyl-L-aspartate(in) + 2 H(+)(in). The enzyme catalyses L-aspartyl-glycine(out) + 2 H(+)(out) = L-aspartyl-glycine(in) + 2 H(+)(in). It carries out the reaction glycyl-L-aspartate(out) + 2 H(+)(out) = glycyl-L-aspartate(in) + 2 H(+)(in). It catalyses the reaction glycyl-L-glutamate(out) + 2 H(+)(out) = glycyl-L-glutamate(in) + 2 H(+)(in). The catalysed reaction is L-alanyl-L-leucyl-L-alanine(out) + H(+)(out) = L-alanyl-L-leucyl-L-alanine(in) + H(+)(in). The enzyme catalyses L-alanyl-L-prolylglycine(out) + H(+)(out) = L-alanyl-L-prolylglycine(in) + H(+)(in). It carries out the reaction glycylglycyl-L-isoleucine(out) + H(+)(out) = glycylglycyl-L-isoleucine(in) + H(+)(in). It catalyses the reaction glycylglycyl-L-proline(out) + H(+)(out) = glycylglycyl-L-proline(in) + H(+)(in). The catalysed reaction is L-methionyl-L-phenylalanyl-L-methionine(out) + H(+)(out) = L-methionyl-L-phenylalanyl-L-methionine(in) + H(+)(in). The enzyme catalyses N-acetyl-D-muramoyl-L-alanyl-D-isoglutamine(out) + 2 H(+)(out) = N-acetyl-D-muramoyl-L-alanyl-D-isoglutamine(in) + 2 H(+)(in). It carries out the reaction N(alpha)-formyl-L-methionyl-L-leucyl-L-phenylalanine(out) + 2 H(+)(out) = N(alpha)-formyl-L-methionyl-L-leucyl-L-phenylalanine(in) + 2 H(+)(in). Electrogenic proton-coupled amino-acid transporter that transports oligopeptides of 2 to 4 amino acids with a preference for dipeptides. Transports neutral and monovalently charged peptides with a proton to peptide stoichiometry of 1:1 or 2:1. Primarily responsible for the absorption of dietary di- and tripeptides from the small intestinal lumen. Mediates transepithelial transport of muramyl and N-formylated bacterial dipeptides contributing to recognition of pathogenic bacteria by the mucosal immune system. This Canis lupus familiaris (Dog) protein is Solute carrier family 15 member 1 (SLC15A1).